Here is a 497-residue protein sequence, read N- to C-terminus: Cysteine--tRNA ligase (497 aa).

Cysteine 32 provides a ligand contact to Zn(2+). The 'HIGH' region signature appears at 34-44 (PTVYGEGHLGH). Cysteine 228, histidine 253, and glutamate 257 together coordinate Zn(2+). Residues 285–289 (KMGKS) carry the 'KMSKS' region motif. Lysine 288 provides a ligand contact to ATP.

This sequence belongs to the class-I aminoacyl-tRNA synthetase family. In terms of assembly, monomer. Requires Zn(2+) as cofactor.

Its subcellular location is the cytoplasm. The catalysed reaction is tRNA(Cys) + L-cysteine + ATP = L-cysteinyl-tRNA(Cys) + AMP + diphosphate. The polypeptide is Cysteine--tRNA ligase (Cytophaga hutchinsonii (strain ATCC 33406 / DSM 1761 / CIP 103989 / NBRC 15051 / NCIMB 9469 / D465)).